Here is a 113-residue protein sequence, read N- to C-terminus: Cell cycle control protein 50C (113 aa).

Residues 1-34 are Cytoplasmic-facing; that stretch reads MEERAQHCLSRLLDNSALKQQELPIHRLYFTARR. A helical transmembrane segment spans residues 35-55; the sequence is VLFVFFATGIFCLCMGIILIL. Topologically, residues 56–113 are extracellular; the sequence is SARSTQEIEINYTRICANCAKLRENASNFDKECTCSIPFYLSGKMMVGEIQETRLTLH. N-linked (GlcNAc...) asparagine glycosylation occurs at Asn66.

This sequence belongs to the CDC50/LEM3 family. As to expression, specifically expressed in testis.

It localises to the membrane. The polypeptide is Cell cycle control protein 50C (Homo sapiens (Human)).